Consider the following 367-residue polypeptide: Spermidine/putrescine import ATP-binding protein PotA (367 aa).

Residues 10–240 form the ABC transporter domain; sequence IEFKNVSLDY…PINHFVANFI (231 aa). 42–49 is a binding site for ATP; it reads GPSGSGKS.

Belongs to the ABC transporter superfamily. Spermidine/putrescine importer (TC 3.A.1.11.1) family. In terms of assembly, the complex is composed of two ATP-binding proteins (PotA), two transmembrane proteins (PotB and PotC) and a solute-binding protein (PotD).

The protein resides in the cell membrane. It catalyses the reaction ATP + H2O + polyamine-[polyamine-binding protein]Side 1 = ADP + phosphate + polyamineSide 2 + [polyamine-binding protein]Side 1.. Part of the ABC transporter complex PotABCD involved in spermidine/putrescine import. Responsible for energy coupling to the transport system. This chain is Spermidine/putrescine import ATP-binding protein PotA, found in Oenococcus oeni (strain ATCC BAA-331 / PSU-1).